The primary structure comprises 256 residues: D-aminoacyl-tRNA deacylase (256 aa).

It belongs to the DtdA deacylase family. Monomer. Zn(2+) serves as cofactor.

The catalysed reaction is a D-aminoacyl-tRNA + H2O = a tRNA + a D-alpha-amino acid + H(+). It catalyses the reaction glycyl-tRNA(Ala) + H2O = tRNA(Ala) + glycine + H(+). D-aminoacyl-tRNA deacylase with broad substrate specificity. By recycling D-aminoacyl-tRNA to D-amino acids and free tRNA molecules, this enzyme counteracts the toxicity associated with the formation of D-aminoacyl-tRNA entities in vivo. This chain is D-aminoacyl-tRNA deacylase, found in Thermoplasma acidophilum (strain ATCC 25905 / DSM 1728 / JCM 9062 / NBRC 15155 / AMRC-C165).